A 422-amino-acid chain; its full sequence is Tk-subtilisin (422 aa).

An N-terminal signal peptide occupies residues 1–24; it reads MKKSIALVLSIVLLAALFAVPASA. Positions 25–106 are excised as a propeptide; that stretch reads GEQNTIRVIV…SWLGGGSTQP (82 aa). One can recognise a Peptidase S8 domain in the interval 111 to 417; the sequence is PWGIERVKAP…YGVVRAALAV (307 aa). Residues Asp-139, His-177, and Ser-348 each act as charge relay system in the active site.

Belongs to the peptidase S8 family. Monomer. Requires Ca(2+) as cofactor.

Its subcellular location is the secreted. Has a broad substrate specificity with a slight preference to large hydrophobic amino acid residues at the P1 position. The sequence is that of Tk-subtilisin from Thermococcus kodakarensis (strain ATCC BAA-918 / JCM 12380 / KOD1) (Pyrococcus kodakaraensis (strain KOD1)).